Here is a 101-residue protein sequence, read N- to C-terminus: MTTNSLVLSGTITRSRRFKSPAGIAHSVIMLEHKSQRYEADMLRNVYVQIQVILSGPRFESVADNLKAGVEVQVQGFMTLQQGRNGQNRLVIHAENVELKT.

An SSB domain is found at 1–101 (MTTNSLVLSG…IHAENVELKT (101 aa)).

Belongs to the PriB family. In terms of assembly, homodimer. Interacts with PriA and DnaT. Component of the replication restart primosome. Primosome assembly occurs via a 'hand-off' mechanism. PriA binds to replication forks, subsequently PriB then DnaT bind; DnaT then displaces ssDNA to generate the helicase loading substrate.

Involved in the restart of stalled replication forks, which reloads the replicative helicase on sites other than the origin of replication; the PriA-PriB pathway is the major replication restart pathway. During primosome assembly it facilitates complex formation between PriA and DnaT on DNA; stabilizes PriA on DNA. Stimulates the DNA unwinding activity of PriA helicase. The chain is Replication restart protein PriB from Shewanella putrefaciens (strain CN-32 / ATCC BAA-453).